Consider the following 211-residue polypeptide: Probable nicotinate-nucleotide adenylyltransferase (211 aa).

The protein belongs to the NadD family.

It catalyses the reaction nicotinate beta-D-ribonucleotide + ATP + H(+) = deamido-NAD(+) + diphosphate. The protein operates within cofactor biosynthesis; NAD(+) biosynthesis; deamido-NAD(+) from nicotinate D-ribonucleotide: step 1/1. Catalyzes the reversible adenylation of nicotinate mononucleotide (NaMN) to nicotinic acid adenine dinucleotide (NaAD). This chain is Probable nicotinate-nucleotide adenylyltransferase, found in Lactiplantibacillus plantarum (strain ATCC BAA-793 / NCIMB 8826 / WCFS1) (Lactobacillus plantarum).